Reading from the N-terminus, the 724-residue chain is Ribosomal RNA large subunit methyltransferase K/L (724 aa).

The 112-residue stretch at 42-153 (DAQRLVLWSR…KGRATLSVDL (112 aa)) folds into the THUMP domain.

This sequence belongs to the methyltransferase superfamily. RlmKL family.

The protein localises to the cytoplasm. It carries out the reaction guanosine(2445) in 23S rRNA + S-adenosyl-L-methionine = N(2)-methylguanosine(2445) in 23S rRNA + S-adenosyl-L-homocysteine + H(+). It catalyses the reaction guanosine(2069) in 23S rRNA + S-adenosyl-L-methionine = N(2)-methylguanosine(2069) in 23S rRNA + S-adenosyl-L-homocysteine + H(+). Functionally, specifically methylates the guanine in position 2445 (m2G2445) and the guanine in position 2069 (m7G2069) of 23S rRNA. This is Ribosomal RNA large subunit methyltransferase K/L from Xylella fastidiosa (strain M12).